We begin with the raw amino-acid sequence, 332 residues long: Fructose-1,6-bisphosphatase class 1 (332 aa).

Mg(2+)-binding residues include E92, D113, L115, and D116. Residues 116–119, N209, Y242, and K272 each bind substrate; that span reads DGSS. E278 contacts Mg(2+).

The protein belongs to the FBPase class 1 family. As to quaternary structure, homotetramer. The cofactor is Mg(2+).

It is found in the cytoplasm. It catalyses the reaction beta-D-fructose 1,6-bisphosphate + H2O = beta-D-fructose 6-phosphate + phosphate. The protein operates within carbohydrate biosynthesis; Calvin cycle. This chain is Fructose-1,6-bisphosphatase class 1, found in Prosthecochloris aestuarii (strain DSM 271 / SK 413).